The chain runs to 527 residues: (3S)-3-amino-3-(3-chloro-4-hydroxyphenyl)propanoyl-[peptidyl-carrier protein SgcC2] monooxygenase (527 aa).

The segment covering 1–10 has biased composition (basic and acidic residues); sequence MPHGAEREAS. Residues 1–22 are disordered; it reads MPHGAEREASPAEESAGTRPLT. FAD is bound by residues 161–163, 167–170, and Thr202; these read HAF and PVDR.

This sequence belongs to the FADH(2)-utilizing monooxygenase family. In terms of assembly, homotetramer.

It carries out the reaction (3S)-3-amino-3-(3-chloro-4-hydroxyphenyl)propanoyl-[SgcC2 peptidyl-carrier protein] + FADH2 + O2 = (3S)-3-amino-3-(3-chloro-4,5-dihydroxyphenyl)propanoyl-[SgcC2 peptidyl-carrier protein] + FAD + H2O + H(+). Its pathway is antibiotic biosynthesis. With respect to regulation, the SgcE6-SgcC hydroxylation activity decreases in the presence of excess FAD. Functionally, oxygenase component of a two-component system involved in the biosynthesis of the enediyne antitumor antibiotic C-1027. Uses FADH(2) supplied by SgcE6 to catalyze the C-5 hydroxylation of (S)-3-chloro-beta-tyrosyl-S-SgcC2. Can also efficiently catalyze the regioselective hydroxylation of other 3-substituted beta-tyrosyl-S-SgcC2 analogs, including the bromo-, iodo-, fluoro-, and methyl-substituted analogs, but does not accept 3-hydroxy-beta-tyrosyl-S-SgcC2 as a substrate. Is only active with SgcC2 (peptidyl carrier protein)-tethered substrates. In Streptomyces globisporus, this protein is (3S)-3-amino-3-(3-chloro-4-hydroxyphenyl)propanoyl-[peptidyl-carrier protein SgcC2] monooxygenase.